We begin with the raw amino-acid sequence, 492 residues long: Glutamyl-tRNA(Gln) amidotransferase subunit A (492 aa).

Active-site charge relay system residues include K79 and S154. S178 (acyl-ester intermediate) is an active-site residue.

It belongs to the amidase family. GatA subfamily. Heterotrimer of A, B and C subunits.

The enzyme catalyses L-glutamyl-tRNA(Gln) + L-glutamine + ATP + H2O = L-glutaminyl-tRNA(Gln) + L-glutamate + ADP + phosphate + H(+). Allows the formation of correctly charged Gln-tRNA(Gln) through the transamidation of misacylated Glu-tRNA(Gln) in organisms which lack glutaminyl-tRNA synthetase. The reaction takes place in the presence of glutamine and ATP through an activated gamma-phospho-Glu-tRNA(Gln). In Acinetobacter baumannii (strain ACICU), this protein is Glutamyl-tRNA(Gln) amidotransferase subunit A.